Reading from the N-terminus, the 570-residue chain is Cytoplasmic polyadenylation element-binding protein 2 (570 aa).

The region spanning 434 to 516 (LVAFIGGVPR…KRVEIKPYFF (83 aa)) is the RRM domain.

Expressed specifically in the spermatogenic germ line.

Functionally, cytoplasmic polyadenylation element binding protein that binds to and regulates the translation of specific mRNAs. Not required for oogenesis. The polypeptide is Cytoplasmic polyadenylation element-binding protein 2 (cpb-2) (Caenorhabditis elegans).